The following is a 501-amino-acid chain: Maturase K (501 aa).

Belongs to the intron maturase 2 family. MatK subfamily.

It localises to the plastid. Its subcellular location is the chloroplast. In terms of biological role, usually encoded in the trnK tRNA gene intron. Probably assists in splicing its own and other chloroplast group II introns. The chain is Maturase K from Amborella trichopoda.